Consider the following 298-residue polypeptide: Foldase protein PrsA 1 (298 aa).

Residues 1 to 23 (MNKTWKKAATVLAFAGIALSATA) form the signal peptide. C24 carries N-palmitoyl cysteine lipidation. C24 carries the S-diacylglycerol cysteine lipid modification. A PpiC domain is found at 141–234 (QPEVTVQHIL…YGYHVIKMIK (94 aa)).

This sequence belongs to the PrsA family.

It is found in the cell membrane. The catalysed reaction is [protein]-peptidylproline (omega=180) = [protein]-peptidylproline (omega=0). In terms of biological role, plays a major role in protein secretion by helping the post-translocational extracellular folding of several secreted proteins. The protein is Foldase protein PrsA 1 (prsA1) of Lactobacillus johnsonii (strain CNCM I-12250 / La1 / NCC 533).